Here is a 498-residue protein sequence, read N- to C-terminus: Peptidase inhibitor 16 (498 aa).

The N-terminal stretch at 1 to 29 (MHGSCSPWVMLPPPLLLLLLLIATGPTTA) is a signal peptide. Residues 39–167 (VDLHNQYRAQ…ANIHLLVCNY (129 aa)) enclose the SCP domain. Asn-116 carries an N-linked (GlcNAc...) asparagine glycan. Disordered regions lie at residues 204–277 (NPEK…GPSS), 317–407 (PKSM…SPLS), and 419–467 (ERGG…ENPE). Composition is skewed to polar residues over residues 218-277 (VPST…GPSS) and 344-353 (LTESGESVPQ). Low complexity predominate over residues 367–380 (PEAILPEAEAAPTE). The span at 383–397 (VELREPEAESPKAES) shows a compositional bias: basic and acidic residues. The segment covering 437 to 447 (SLPTFPSASGN) has biased composition (polar residues). Asn-447 carries N-linked (GlcNAc...) asparagine glycosylation.

The protein belongs to the CRISP family. As to quaternary structure, interacts with PSP94/MSMB. Post-translationally, N-glycosylated. In terms of tissue distribution, expressed strongly in aorta and skin, and weakly in adipose tissue (at protein level). In heart, found in the extracellular space surrounding cardiomyocytes (at protein level).

The protein localises to the secreted. May inhibit cardiomyocyte growth. The polypeptide is Peptidase inhibitor 16 (Pi16) (Mus musculus (Mouse)).